Consider the following 649-residue polypeptide: Choline transporter-like protein 3 (649 aa).

Residues 33–53 (AWLFLFFLFWTGLVFIMGYSV) form a helical membrane-spanning segment. N-linked (GlcNAc...) asparagine glycosylation is found at asparagine 136 and asparagine 151. 5 helical membrane passes run 213-233 (DTVL…MFTF), 235-255 (FITT…LLFV), 284-304 (LLGF…LIYV), 334-354 (LWTF…LLSL), and 384-404 (LIGL…AVAG). 3 N-linked (GlcNAc...) asparagine glycosylation sites follow: asparagine 414, asparagine 502, and asparagine 520. 2 helical membrane passes run 533–553 (FIIF…GLMA) and 562–582 (VWAV…HSFL).

The protein belongs to the CTL (choline transporter-like) family.

It is found in the membrane. The polypeptide is Choline transporter-like protein 3 (SLC44A3) (Bos taurus (Bovine)).